The following is a 962-amino-acid chain: Protease 3 (962 aa).

The N-terminal stretch at 1–23 (MPRSIWFKALLLFVALWAPLSQA) is a signal peptide. Histidine 88 provides a ligand contact to Zn(2+). The active-site Proton acceptor is glutamate 91. The Zn(2+) site is built by histidine 92 and glutamate 169.

Belongs to the peptidase M16 family. In terms of assembly, monomer. The cofactor is Zn(2+).

The protein localises to the periplasm. The enzyme catalyses Preferential cleavage of 16-Tyr-|-Leu-17 and 25-Phe-|-Tyr-26 bonds of oxidized insulin B chain. Also acts on other substrates of Mw less than 7 kDa such as insulin and glucagon.. Functionally, endopeptidase that degrades small peptides of less than 7 kDa, such as glucagon and insulin. This chain is Protease 3 (ptrA), found in Escherichia coli O6:H1 (strain CFT073 / ATCC 700928 / UPEC).